Reading from the N-terminus, the 247-residue chain is MIPMMTLKRVCRVLLFITQMYVLSGRGFLSFEYSEPVAQPLKDHFPSSTIATSTKATATKIPDYMEKCPSNGQCSRLPSDCMTCATNYSCIYGKPVTFNCTAKNGVVCFDVNSQPQEYFTISMTCQFCWQLPPSDYVCNLSSSCKTVSCPRQRYNTTCTVLDHAHCLGNRTFPKMLYCNWTGGYKWSTALALSITLGGFGADRFYLGQWREGLGKLFSFGGLGIWTLIDVFLISVGYVGPADGSLYI.

The signal sequence occupies residues Met-1–Gly-25. The Extracellular segment spans residues Arg-26–Asn-179. Residues Asn-87, Asn-99, Asn-139, Asn-155, Asn-169, and Asn-179 are each glycosylated (N-linked (GlcNAc...) asparagine). A helical membrane pass occupies residues Trp-180–Gly-200. The 49-residue stretch at Gly-183–Phe-231 folds into the TM2 domain. The Cytoplasmic portion of the chain corresponds to Ala-201 to Lys-215. Residues Leu-216–Gly-236 form a helical membrane-spanning segment. Over Tyr-237–Ile-247 the chain is Extracellular.

Belongs to the TM2 family.

Its subcellular location is the membrane. The polypeptide is TM2 domain-containing protein 3 (tm2d3) (Xenopus tropicalis (Western clawed frog)).